The chain runs to 1477 residues: Inositol hexakisphosphate and diphosphoinositol-pentakisphosphate kinase 1 (1477 aa).

Residues 27–47 are disordered; that stretch reads TRGLGMRPEESDSELLEDEED. The span at 37 to 47 shows a compositional bias: acidic residues; it reads SDSELLEDEED. 64–65 contributes to the substrate binding site; the sequence is KK. Residues arginine 145, lysine 198, histidine 205, arginine 224, 248–251, and 257–259 contribute to the ATP site; these read EEFM and DVK. Residue 224-225 coordinates substrate; sequence RK. Residues lysine 259 and arginine 273 each contribute to the substrate site. ATP contacts are provided by residues serine 275, aspartate 320, and 332-334; that span reads DVN. 337 to 340 provides a ligand contact to substrate; it reads SFVK. Residues 382–453 are polyphosphoinositide-binding domain; sequence PTTSGTMMEL…VLDITRLLLA (72 aa). Positions 910-1016 are disordered; it reads KGVEEEGSAP…PTEMKQSGLG (107 aa). Serine 940 and serine 983 each carry phosphoserine. Positions 1001–1016 are enriched in polar residues; that stretch reads FSSSRPPTEMKQSGLG. A phosphoserine mark is found at serine 1033, serine 1069, serine 1141, and serine 1148. Disordered regions lie at residues 1131–1248 and 1438–1477; these read HSNQ…KPCQ and REEVPQVQCPPSNANPQSQSLAPDQNAPLPPATCDSSFSH. Residues 1164-1182 are compositionally biased toward low complexity; that stretch reads SSGPSSTVSSAGPSSPTAV. Positions 1446–1460 are enriched in polar residues; that stretch reads CPPSNANPQSQSLAP.

It belongs to the histidine acid phosphatase family. VIP1 subfamily.

The protein localises to the cytoplasm. The protein resides in the cytosol. It is found in the cell membrane. It carries out the reaction 1D-myo-inositol hexakisphosphate + ATP = 1-diphospho-1D-myo-inositol 2,3,4,5,6-pentakisphosphate + ADP. It catalyses the reaction 5-diphospho-1D-myo-inositol 1,2,3,4,6-pentakisphosphate + ATP + H(+) = 1,5-bis(diphospho)-1D-myo-inositol 2,3,4,6-tetrakisphosphate + ADP. Its function is as follows. Bifunctional inositol kinase that acts in concert with the IP6K kinases IP6K1, IP6K2 and IP6K3 to synthesize the diphosphate group-containing inositol pyrophosphates diphosphoinositol pentakisphosphate, PP-InsP5, and bis-diphosphoinositol tetrakisphosphate, (PP)2-InsP4. PP-InsP5 and (PP)2-InsP4, also respectively called InsP7 and InsP8, regulate a variety of cellular processes, including apoptosis, vesicle trafficking, cytoskeletal dynamics, exocytosis, insulin signaling and neutrophil activation. Phosphorylates inositol hexakisphosphate (InsP6) at position 1 to produce PP-InsP5 which is in turn phosphorylated by IP6Ks to produce (PP)2-InsP4. Alternatively, phosphorylates PP-InsP5 at position 1, produced by IP6Ks from InsP6, to produce (PP)2-InsP4. Activated when cells are exposed to hyperosmotic stress. In Bos taurus (Bovine), this protein is Inositol hexakisphosphate and diphosphoinositol-pentakisphosphate kinase 1.